The primary structure comprises 298 residues: Acetylglutamate kinase (298 aa).

Substrate-binding positions include 69-70 (GG), Arg-91, and Asn-196.

It belongs to the acetylglutamate kinase family. ArgB subfamily.

The protein localises to the cytoplasm. The enzyme catalyses N-acetyl-L-glutamate + ATP = N-acetyl-L-glutamyl 5-phosphate + ADP. The protein operates within amino-acid biosynthesis; L-arginine biosynthesis; N(2)-acetyl-L-ornithine from L-glutamate: step 2/4. Functionally, catalyzes the ATP-dependent phosphorylation of N-acetyl-L-glutamate. This Nitrobacter winogradskyi (strain ATCC 25391 / DSM 10237 / CIP 104748 / NCIMB 11846 / Nb-255) protein is Acetylglutamate kinase.